Here is a 435-residue protein sequence, read N- to C-terminus: MAALMYNVSRGLVMLGERSLFQRERYQILVNSRRFLRGLRRRPVAVLYPDGERETLIKSKRATDITSQGFTQKGKARKDVTERAAYKNCSGFVSERAEESSQINKLKLAGLRFEKAPAGDNRLARVSSVARSRAFRDKEGKVLLEGRRLICDALSAGASPQMIFFSLLERLQELPLDKLQQAKLIKVKYEDIKLWSDLVTPQGLIAIFSKPDASRLTFPKDARLQSVPLFLICDNVRDAGNLGTILRCAAAAGGDRVLLSKGCVDAWEPKVLRSAMGAHFRLPVFPNLDWDDISKHLPKNVIVHVADNYSTSTKQLVSGQTENVSSDDYSESDSDDDDDEEEDEDSLPHVKPQVYHECWAQRSAALVIGGETHGLSVEALRLAEETDGKRLFVPMAPGVESLNSAMAAGILLFEGRRQLLMLSDKLRRRARTKML.

Residues 1-42 constitute a mitochondrion transit peptide; that stretch reads MAALMYNVSRGLVMLGERSLFQRERYQILVNSRRFLRGLRRR. The segment covering 314-324 has biased composition (polar residues); the sequence is KQLVSGQTENV. The segment at 314 to 351 is disordered; it reads KQLVSGQTENVSSDDYSESDSDDDDDEEEDEDSLPHVK. A compositionally biased stretch (acidic residues) spans 328–345; that stretch reads DYSESDSDDDDDEEEDED. Residues Gly-369 and Leu-402 each contribute to the S-adenosyl-L-methionine site.

The protein belongs to the class IV-like SAM-binding methyltransferase superfamily. RNA methyltransferase TrmH family.

The protein localises to the mitochondrion. It catalyses the reaction a uridine in rRNA + S-adenosyl-L-methionine = a 2'-O-methyluridine in rRNA + S-adenosyl-L-homocysteine + H(+). S-adenosyl-L-methionine-dependent 2'-O-ribose methyltransferase that catalyzes the formation of 2'-O-methylguanosine at position 1485 (Gm1485) in the mitochondrial large subunit ribosomal RNA (mtLSU rRNA), a conserved modification in the peptidyl transferase domain of the mtLSU rRNA. Also required for formation of 2'-O-methyluridine at position 1484 (Um1484) mediated by MRM2. The sequence is that of rRNA methyltransferase 3A, mitochondrial (mrm3a) from Danio rerio (Zebrafish).